We begin with the raw amino-acid sequence, 558 residues long: WW domain-containing adapter protein with coiled-coil (558 aa).

3 disordered regions span residues 1-129, 159-244, and 321-461; these read MVMY…WSEH, QRQK…SPAP, and VAQQ…APGR. Residues 22–32 show a composition bias toward polar residues; sequence QPYQTLKYSSK. Basic and acidic residues-rich tracts occupy residues 33–46 and 56–70; these read SHPDHRHEKMRDSN and RRSDSPDNKHMDNTG. The span at 72-82 shows a compositional bias: basic residues; sequence GRAKAIHPHRG. A compositionally biased stretch (low complexity) spans 99–116; that stretch reads NHSSLHSSNSHSNPNKSS. Residues 120–153 enclose the WW domain; the sequence is FEPADDWSEHISSSGKKYYYNCRTEVSQWEKPKE. The segment covering 175–184 has biased composition (basic and acidic residues); it reads PKDRDYRREA. Residues 188–200 are compositionally biased toward polar residues; sequence TPASYSSTKSSIA. The span at 204 to 217 shows a compositional bias: low complexity; that stretch reads PSSLTPSSSSAAVS. 2 stretches are compositionally biased toward polar residues: residues 223–234 and 321–378; these read NSASSASGSTVP and VAQQ…MTVK. The span at 402 to 431 shows a compositional bias: low complexity; it reads SPRTLQRQSSQRSPSPGPNHMGSNSSSSSN. The span at 432–443 shows a compositional bias: gly residues; sequence NGGGGGGQGPGV. A coiled-coil region spans residues 529–555; it reads QATLREQRILFLRQQIKELEKLKNQNS.

It is found in the nucleus. Acts as a linker between gene transcription and histone H2B monoubiquitination at 'Lys-120' (H2BK120ub1). Positive regulator of amino acid starvation-induced autophagy. Positively regulates MTOR activity. May negatively regulate the ubiquitin proteasome pathway. The sequence is that of WW domain-containing adapter protein with coiled-coil (waca) from Danio rerio (Zebrafish).